Here is a 314-residue protein sequence, read N- to C-terminus: MTNQTQMMEFLLVRFTENWVLLRLHALLFSLIYLTAVLMNLVIILLMILDHRLHMAMYFFLRHLSFLDLCLISATVPKSILNSVASTDSISFLGCVLQLFLVVLLAGSEIGILTAMSYDRYAAICCPLHCEAVMSRGLCVQLMALSWLNRGALGLLYTAGTFSLNFYGSDELHQFFCDVPALLKLTCSKEHAIISVSVAIGVCYAFSCLVCIVVSYVYIFSAVLRISQRQRQSKAFSNCVPHLIVVTVFLVTGAVAYLKPGSDAPSILDLLVSVFYSVAPPTLNPVIYCLKNKDIKSALSKVLWNVRSSGVMKR.

At 1–23 the chain is on the extracellular side; the sequence is MTNQTQMMEFLLVRFTENWVLLR. Asparagine 3 is a glycosylation site (N-linked (GlcNAc...) asparagine). The helical transmembrane segment at 24–44 threads the bilayer; the sequence is LHALLFSLIYLTAVLMNLVII. The Cytoplasmic portion of the chain corresponds to 45-52; it reads LLMILDHR. The helical transmembrane segment at 53–73 threads the bilayer; it reads LHMAMYFFLRHLSFLDLCLIS. The Extracellular portion of the chain corresponds to 74–97; that stretch reads ATVPKSILNSVASTDSISFLGCVL. Cysteines 95 and 187 form a disulfide. The chain crosses the membrane as a helical span at residues 98 to 118; that stretch reads QLFLVVLLAGSEIGILTAMSY. At 119–131 the chain is on the cytoplasmic side; the sequence is DRYAAICCPLHCE. Residues 132 to 152 form a helical membrane-spanning segment; the sequence is AVMSRGLCVQLMALSWLNRGA. At 153–194 the chain is on the extracellular side; sequence LGLLYTAGTFSLNFYGSDELHQFFCDVPALLKLTCSKEHAII. A helical transmembrane segment spans residues 195–215; that stretch reads SVSVAIGVCYAFSCLVCIVVS. The Cytoplasmic portion of the chain corresponds to 216 to 235; the sequence is YVYIFSAVLRISQRQRQSKA. Residues 236 to 256 form a helical membrane-spanning segment; that stretch reads FSNCVPHLIVVTVFLVTGAVA. At 257–269 the chain is on the extracellular side; it reads YLKPGSDAPSILD. Residues 270-290 traverse the membrane as a helical segment; the sequence is LLVSVFYSVAPPTLNPVIYCL. Residues 291–314 are Cytoplasmic-facing; the sequence is KNKDIKSALSKVLWNVRSSGVMKR.

Belongs to the G-protein coupled receptor 1 family.

It is found in the cell membrane. In terms of biological role, odorant receptor. The chain is Olfactory receptor 14K1 (OR14K1) from Homo sapiens (Human).